Here is a 387-residue protein sequence, read N- to C-terminus: Exodeoxyribonuclease 7 large subunit (387 aa).

It belongs to the XseA family. Heterooligomer composed of large and small subunits.

It is found in the cytoplasm. It catalyses the reaction Exonucleolytic cleavage in either 5'- to 3'- or 3'- to 5'-direction to yield nucleoside 5'-phosphates.. Its function is as follows. Bidirectionally degrades single-stranded DNA into large acid-insoluble oligonucleotides, which are then degraded further into small acid-soluble oligonucleotides. The polypeptide is Exodeoxyribonuclease 7 large subunit (Synechococcus sp. (strain CC9902)).